The sequence spans 521 residues: MMSTSSDSRSDEGHAACLLNQLDVKVRHLVADSRKLKPGDTFLACAGERHDARNDIPQAIARGVNAIIWEKQGFSWKPEWKIPNLGVAGLRHEAGKIASEAYGHPSRHLWLVGITGTNGKTTCSQWYAQAMAALGKKTAVIGTLGHGFPGALYPSEHTTPDAVYLQQLMAEYLHQGASSLVMEASSHGLSQDRLIGSEFAVAVLTNLTRDHLDYHDSMDAYAAAKAKLFFWEGLQYAVLNLDEVLGVELSQQLAGKDLSIIGYGFKQPRQTAQTAGNQKILYGSNLQFTTQQIGFDVEFCNRYASLQCNVTGRYNAYNLLAVLAALLASNIDLDDAITALRQVQPIPGRMEKLGGGNQPVVIVDYAHTPDALNEVLTGLRETLAGTRIKKRIRKNQAKLICVIGCGGDRDRGKRPLIGEIASRLADEVIITSDNPRNENPADIISEVMLGASGKHCTSEVDRTAAIYRAIHGARKGDIVLIAGKGAETSQEIQGKKYPYDDREVVRQVLHDLAGPELQVQG.

Ser33 provides a ligand contact to UDP-N-acetyl-alpha-D-muramoyl-L-alanyl-D-glutamate. 116–122 (GTNGKTT) provides a ligand contact to ATP. UDP-N-acetyl-alpha-D-muramoyl-L-alanyl-D-glutamate is bound by residues 158–159 (TT), Ser185, Gln191, and Arg193. N6-carboxylysine is present on Lys225. Meso-2,6-diaminopimelate contacts are provided by residues Arg409, 433 to 436 (DNPR), Gly483, and Glu487. A Meso-diaminopimelate recognition motif motif is present at residues 433-436 (DNPR).

It belongs to the MurCDEF family. MurE subfamily. Mg(2+) serves as cofactor. In terms of processing, carboxylation is probably crucial for Mg(2+) binding and, consequently, for the gamma-phosphate positioning of ATP.

The protein resides in the cytoplasm. It catalyses the reaction UDP-N-acetyl-alpha-D-muramoyl-L-alanyl-D-glutamate + meso-2,6-diaminopimelate + ATP = UDP-N-acetyl-alpha-D-muramoyl-L-alanyl-gamma-D-glutamyl-meso-2,6-diaminopimelate + ADP + phosphate + H(+). Its pathway is cell wall biogenesis; peptidoglycan biosynthesis. Functionally, catalyzes the addition of meso-diaminopimelic acid to the nucleotide precursor UDP-N-acetylmuramoyl-L-alanyl-D-glutamate (UMAG) in the biosynthesis of bacterial cell-wall peptidoglycan. The sequence is that of UDP-N-acetylmuramoyl-L-alanyl-D-glutamate--2,6-diaminopimelate ligase from Nitrosomonas europaea (strain ATCC 19718 / CIP 103999 / KCTC 2705 / NBRC 14298).